The chain runs to 142 residues: Glycine-rich RNA-binding protein 1 (142 aa).

The region spanning 1–65 is the RRM domain; the sequence is NSLHSAFSTY…RNITVNEAQS (65 aa). The segment at 48-101 is disordered; it reads MNGKELDGRNITVNEAQSRGGRGGGGGGGYGGGRGGGGGYGRRDGGGGGYGGGG. Residues 67-101 are compositionally biased toward gly residues; it reads GGRGGGGGGGYGGGRGGGGGYGRRDGGGGGYGGGG.

Functionally, possibly has a role in RNA transcription or processing during stress. The polypeptide is Glycine-rich RNA-binding protein 1 (GRP1) (Sorghum bicolor (Sorghum)).